We begin with the raw amino-acid sequence, 637 residues long: Chaperone protein HtpG (637 aa).

Residues 1-345 (MSHQETHGFQ…SNDLPLNVSR (345 aa)) are a; substrate-binding. The b stretch occupies residues 346–562 (EILQDNKVTR…EGEMSSQMIK (217 aa)). A c region spans residues 563 to 637 (LMQAAGQPVP…VNQMLLKSVG (75 aa)).

It belongs to the heat shock protein 90 family. In terms of assembly, homodimer.

It localises to the cytoplasm. In terms of biological role, molecular chaperone. Has ATPase activity. The polypeptide is Chaperone protein HtpG (Shewanella amazonensis (strain ATCC BAA-1098 / SB2B)).